A 1838-amino-acid chain; its full sequence is Nuclear pore complex protein NUP205 (1838 aa).

It belongs to the NUP186/NUP192/NUP205 family. As to quaternary structure, part of the nuclear pore complex (NPC). The NPC has an eight-fold symmetrical structure comprising a central transport channel and two rings, the cytoplasmic and nuclear rings, to which eight filaments are attached. The cytoplasmic filaments have loose ends, while the nuclear filaments are joined in a distal ring, forming a nuclear basket. NPCs are highly dynamic in configuration and composition, and can be devided in 3 subcomplexes, the NUP62 subcomplex, the NUP107-160 subcomplex and the NUP93 subcomplex, containing approximately 30 different nucleoporin proteins.

It localises to the nucleus envelope. It is found in the nucleus. The protein resides in the nuclear pore complex. The sequence is that of Nuclear pore complex protein NUP205 from Arabidopsis thaliana (Mouse-ear cress).